A 258-amino-acid chain; its full sequence is Transcription initiation factor TFIID subunit 9B (258 aa).

Residue Met1 is modified to N-acetylmethionine. Ser147 carries the phosphoserine modification. Phosphothreonine is present on residues Thr159 and Thr174. Ser177 bears the Phosphoserine mark. Residues 227–236 (SSQSTATDSN) show a composition bias toward polar residues. Residues 227 to 258 (SSQSTATDSNPLKRKHDDDDDDDDDDDDNDTM) are disordered. The segment covering 244 to 258 (DDDDDDDDDDDNDTM) has biased composition (acidic residues).

The protein belongs to the TAF9 family. As to quaternary structure, binds TAF5 and TAF6. Component of TFIID and the TATA-binding protein-free TAF complex (TFTC). TFIID is composed of TATA binding protein (TBP) and a number of TBP-associated factors (TAFs). Binds N-terminal domain of p53/TP53 which is essential for transcription.

It is found in the nucleus. Essential for cell viability. TAF9 and TAF9L are involved in transcriptional activation as well as repression of distinct but overlapping sets of genes. May have a role in gene regulation associated with apoptosis. TAFs are components of the transcription factor IID (TFIID) complex, the TBP-free TAFII complex (TFTC), the PCAF histone acetylase complex and the STAGA transcription coactivator-HAT complex. TFIID or TFTC are essential for the regulation of RNA polymerase II-mediated transcription. The protein is Transcription initiation factor TFIID subunit 9B (Taf9b) of Rattus norvegicus (Rat).